A 437-amino-acid chain; its full sequence is MNYPYIPHTDEDIRAMLEFIGVSSIEDLFSSIPVSARSSLNIPESRDEFSVFKRLKEISEVNASLEDYAVFLGAGVYKRYVPTVVYDLAMKPDFLTAYTPYQAEVSQGTLQALFEYQTMVCELTGMEVANASMYDGATALAEAALMSFRLTGKEKVVVARSVHPEYRAVLRTYLEKRGFTVVEAGYDETGRVLLEEVDEETAAIAIQYPNFFGIIEDLDYVRSRSGNALLIVVVEPVSLALLEPPGSYGADIVVGEGQSLGLPMWFGGYSLGIFATKEKYVRQMPGRLIGQTVDQDGSVTYTMILQTREQHIRRARATSNICSNHAHAALIAAVYMSVMGPDGLREVARRSYSAAHYLQERLEDMGFKLCFSGEFFSEFVFNVPEDYPERWKWMMAKKILGPLPLKGFYPELGDTALACATEVISKEDIEKLLEAMK.

Belongs to the GcvP family. N-terminal subunit subfamily. As to quaternary structure, the glycine cleavage system is composed of four proteins: P, T, L and H. In this organism, the P 'protein' is a heterodimer of two subunits.

The enzyme catalyses N(6)-[(R)-lipoyl]-L-lysyl-[glycine-cleavage complex H protein] + glycine + H(+) = N(6)-[(R)-S(8)-aminomethyldihydrolipoyl]-L-lysyl-[glycine-cleavage complex H protein] + CO2. The glycine cleavage system catalyzes the degradation of glycine. The P protein binds the alpha-amino group of glycine through its pyridoxal phosphate cofactor; CO(2) is released and the remaining methylamine moiety is then transferred to the lipoamide cofactor of the H protein. The protein is Probable glycine dehydrogenase (decarboxylating) subunit 1 of Thermotoga petrophila (strain ATCC BAA-488 / DSM 13995 / JCM 10881 / RKU-1).